We begin with the raw amino-acid sequence, 437 residues long: MQVSVETTSGLERRVTVGVPAEKVDVAVEGKLQEAQKTIRLDGFRPGKVPMREVKRRFGGAVRNEVLADVMREAFIEAVEQEKLQPAGMPGFEATTNEAGKDLEFVATFEVYPQVELAAFDSIEVEKPQSEVTDADVDTMIETLRQQRAEFADVDRASEIGDRVNIDFKGLKDGEAFEGGTAEGQNLELGSGQMIPGFEDGIVGMKAGEEKDIDVTFPEDYQSEDLKGQAVVFHIKVNKVEGKALPEVDAEFMKGFGVDDGDETKFKAEVRKNMERELKNAITSKVKEQAMDGLVNLHEFDLPGALVTQEIQRMRQQMMQQFGGGQQFDPSILPDDLFKEQAERSVRLGLVVRAILDKNEIKADADKVKARVEEISEQYEKPEEVVSWVYSNPQQLQQIEGAILEEQVVDLVLESAKVEEKTMPYQDAVKPREQADG.

The PPIase FKBP-type domain occupies 161–246 (GDRVNIDFKG…VNKVEGKALP (86 aa)).

It belongs to the FKBP-type PPIase family. Tig subfamily.

The protein resides in the cytoplasm. The enzyme catalyses [protein]-peptidylproline (omega=180) = [protein]-peptidylproline (omega=0). In terms of biological role, involved in protein export. Acts as a chaperone by maintaining the newly synthesized protein in an open conformation. Functions as a peptidyl-prolyl cis-trans isomerase. The sequence is that of Trigger factor from Alcanivorax borkumensis (strain ATCC 700651 / DSM 11573 / NCIMB 13689 / SK2).